Reading from the N-terminus, the 42-residue chain is MNEFKRCMRVFSHSPFKVRLMLLSMLCDMVNNKPQQDKPSDK.

Its subcellular location is the cytoplasm. Required for repression of mntH by MntR. May function as a chaperone that makes manganese more available by delivering it to the necessary cellular locations when manganese is limiting. The protein is Small protein MntS (mntS) of Escherichia coli (strain K12).